The following is a 227-amino-acid chain: Cytochrome c oxidase subunit 2 (227 aa).

Residues 1-14 (MAYPFELGFQDATS) are Mitochondrial intermembrane-facing. Residues 15-45 (PIMEELLHFHDHTLMIVFLISSLVLYIISLM) traverse the membrane as a helical segment. At 46–59 (LTTKLTHTSTMDAQ) the chain is on the mitochondrial matrix side. Residues 60 to 87 (EVETIWTILPAIILILIALPSLRILYMM) traverse the membrane as a helical segment. The Mitochondrial intermembrane portion of the chain corresponds to 88–227 (DEINDPSLTV…HFENWSSSML (140 aa)). Cu cation contacts are provided by H161, C196, E198, C200, H204, and M207. Mg(2+) is bound at residue E198.

Belongs to the cytochrome c oxidase subunit 2 family. In terms of assembly, component of the cytochrome c oxidase (complex IV, CIV), a multisubunit enzyme composed of 14 subunits. The complex is composed of a catalytic core of 3 subunits MT-CO1, MT-CO2 and MT-CO3, encoded in the mitochondrial DNA, and 11 supernumerary subunits COX4I, COX5A, COX5B, COX6A, COX6B, COX6C, COX7A, COX7B, COX7C, COX8 and NDUFA4, which are encoded in the nuclear genome. The complex exists as a monomer or a dimer and forms supercomplexes (SCs) in the inner mitochondrial membrane with NADH-ubiquinone oxidoreductase (complex I, CI) and ubiquinol-cytochrome c oxidoreductase (cytochrome b-c1 complex, complex III, CIII), resulting in different assemblies (supercomplex SCI(1)III(2)IV(1) and megacomplex MCI(2)III(2)IV(2)). Found in a complex with TMEM177, COA6, COX18, COX20, SCO1 and SCO2. Interacts with TMEM177 in a COX20-dependent manner. Interacts with COX20. Interacts with COX16. Cu cation is required as a cofactor.

Its subcellular location is the mitochondrion inner membrane. The enzyme catalyses 4 Fe(II)-[cytochrome c] + O2 + 8 H(+)(in) = 4 Fe(III)-[cytochrome c] + 2 H2O + 4 H(+)(out). Component of the cytochrome c oxidase, the last enzyme in the mitochondrial electron transport chain which drives oxidative phosphorylation. The respiratory chain contains 3 multisubunit complexes succinate dehydrogenase (complex II, CII), ubiquinol-cytochrome c oxidoreductase (cytochrome b-c1 complex, complex III, CIII) and cytochrome c oxidase (complex IV, CIV), that cooperate to transfer electrons derived from NADH and succinate to molecular oxygen, creating an electrochemical gradient over the inner membrane that drives transmembrane transport and the ATP synthase. Cytochrome c oxidase is the component of the respiratory chain that catalyzes the reduction of oxygen to water. Electrons originating from reduced cytochrome c in the intermembrane space (IMS) are transferred via the dinuclear copper A center (CU(A)) of subunit 2 and heme A of subunit 1 to the active site in subunit 1, a binuclear center (BNC) formed by heme A3 and copper B (CU(B)). The BNC reduces molecular oxygen to 2 water molecules using 4 electrons from cytochrome c in the IMS and 4 protons from the mitochondrial matrix. This chain is Cytochrome c oxidase subunit 2 (MT-CO2), found in Tamias amoenus (Yellow-pine chipmunk).